The chain runs to 259 residues: MRVLVSNDDGVDAPGIQILAEALRRAGHEVMVVAPDRDRSGASNSLTLDVPIRTRRIDAQTCAVAGTPTDCVHLALTGMLDYDPDIVVSGINNSANLGDDVIYSGTVSAAMEGRFLGLPAVAVSLVTQNHEAHHFETAARAAVEIVARLKADPLPADTILNVNVPDLAWADVLGFEVTRLGNRHRSEPCVPQSDPRGRTVYWIGPAGPEQDAGAGTDFHAVRTGHISITPIHVDLTRYQALDTVAGWVGGLTAALDAPA.

Positions 8, 9, 40, and 92 each coordinate a divalent metal cation.

This sequence belongs to the SurE nucleotidase family. A divalent metal cation is required as a cofactor.

The protein resides in the cytoplasm. It catalyses the reaction a ribonucleoside 5'-phosphate + H2O = a ribonucleoside + phosphate. In terms of biological role, nucleotidase that shows phosphatase activity on nucleoside 5'-monophosphates. This is 5'-nucleotidase SurE from Xanthomonas campestris pv. campestris (strain B100).